A 764-amino-acid chain; its full sequence is Cyclin-F (764 aa).

A Nuclear localization signal 1 motif is present at residues 19–27; it reads RKRVRKRAS. The region spanning 28-75 is the F-box domain; that stretch reads AVSLLSLPEELLVFVLQCLSAEDLLSVRAVHSHLCDIIDTNASIWARV. Residues 307-404 form the Cyclin N-terminal domain; sequence TKRYILVDWL…EVISVLDGKI (98 aa). Residues 309–312 carry the D box 1 motif; the sequence is RYIL. A Nuclear localization signal 2 motif is present at residues 570–575; it reads SSKRRR. The PEST stretch occupies residues 583–738; the sequence is RGAFVATPTA…PSQRIRRQVK (156 aa). The segment at 662–754 is disordered; sequence CEEDEQEPPT…HSAGEAEQED (93 aa). The segment covering 682-692 has biased composition (low complexity); the sequence is SSSSTSSSSSS. The segment covering 702–722 has biased composition (polar residues); the sequence is SGYSSIQSFPSPTGSSALVSP. A compositionally biased stretch (basic residues) spans 732-742; sequence RIRRQVKRKNT.

It belongs to the cyclin family. Cyclin AB subfamily. Component of the SCF(CCNF) complex. As to expression, expressed in the brain.

The protein localises to the nucleus. Its subcellular location is the cytoplasm. It is found in the perinuclear region. The protein resides in the cytoskeleton. It localises to the microtubule organizing center. The protein localises to the centrosome. Its subcellular location is the centriole. Functionally, substrate recognition component of a SCF (SKP1-CUL1-F-box protein) E3 ubiquitin-protein ligase complex which mediates the ubiquitination and subsequent proteasomal degradation of target proteins. The SCF(CCNF) E3 ubiquitin-protein ligase complex is an integral component of the ubiquitin proteasome system (UPS) and links proteasome degradation to the cell cycle. Mediates the substrate recognition and the proteasomal degradation of various target proteins during G2 phase involved in the regulation of cell cycle progression and in the maintenance of genome stability. May play a role in motor neuron development and axonal outgrowth. In Danio rerio (Zebrafish), this protein is Cyclin-F (ccnf).